The following is a 415-amino-acid chain: Gamma-glutamyl phosphate reductase (415 aa).

The protein belongs to the gamma-glutamyl phosphate reductase family.

The protein resides in the cytoplasm. It catalyses the reaction L-glutamate 5-semialdehyde + phosphate + NADP(+) = L-glutamyl 5-phosphate + NADPH + H(+). The protein operates within amino-acid biosynthesis; L-proline biosynthesis; L-glutamate 5-semialdehyde from L-glutamate: step 2/2. Functionally, catalyzes the NADPH-dependent reduction of L-glutamate 5-phosphate into L-glutamate 5-semialdehyde and phosphate. The product spontaneously undergoes cyclization to form 1-pyrroline-5-carboxylate. This Thermotoga petrophila (strain ATCC BAA-488 / DSM 13995 / JCM 10881 / RKU-1) protein is Gamma-glutamyl phosphate reductase.